Here is a 491-residue protein sequence, read N- to C-terminus: Cadherin-3 (491 aa).

Cadherin domains lie at 1-102 (ENTV…PPVF), 103-208 (VPPS…DHGP), and 209-314 (VPEP…DPWT). Over 1-316 (ENTVSHEVQR…VTCRDPWTWG (316 aa)) the chain is Extracellular. A glycan (N-linked (GlcNAc...) asparagine) is linked at Asn228. A helical transmembrane segment spans residues 317–339 (FLLPILGAALALLLLLLVLLFLV). Over 340-491 (RKKRKIKEPL…ADMYGGGQDD (152 aa)) the chain is Cytoplasmic.

As to quaternary structure, interacts with CDCP1 and CTNNB1.

The protein localises to the cell membrane. In terms of biological role, cadherins are calcium-dependent cell adhesion proteins. They preferentially interact with themselves in a homophilic manner in connecting cells; cadherins may thus contribute to the sorting of heterogeneous cell types. The protein is Cadherin-3 (CDH3) of Bos taurus (Bovine).